Reading from the N-terminus, the 189-residue chain is RNA-binding protein (189 aa).

Residues 55–69 (CICPSSNHLVDDCVC) form a C4-type zinc finger. Residues 114–189 (FLTSVNPGES…DANTRKSKRK (76 aa)) form a disordered region. A compositionally biased stretch (basic and acidic residues) spans 158–167 (SSSERKRKEY). Residues 168–180 (SSNSETDLSSDSD) are compositionally biased toward low complexity.

This sequence belongs to the phytoreovirus RNA-binding protein family.

The protein resides in the host cytoplasm. Its function is as follows. Constituent of viral factories. Binds to ssRNA and dsRNA. The chain is RNA-binding protein from Alopecurus aequalis (Barnyard grass).